Reading from the N-terminus, the 400-residue chain is MGGWSSKPRQGMGTNLSVPNPLGFFPDHHLDPAFGANSNNPDWDFNPNKDHWPKANQVRAGAFGPGFTPPHCSLLGWSPQAQGILTTVPAAPPPASSNRQSGKQPTPISPPLRDSHPQAMQWNSTTFHQTLQDPRVRGLYFPAGGSSSGTVNPVPTTASPISSIFSRIGDPALNMENITSGFLGPLLVLQAGFFLLTRILTIPQSLDSWWTSLNFLGGTTVCLGQNSQSPISNHSPTSCPPTCPGYRWMCLRRFIIFLFILLLCLIFLLVLLDYQGMLPVCPLIPGSSTTSTGPCRTCTTPAQGTSMYPSCCCTKPSDGNCTCIPIPSSWAFGKFLWEWASARFSWLSLLVPFVQWFVGLSPTVWLSVIWMMWYWGPSLYSILSPFLPLLPIFFCLWVYI.

Residue Met-1 is modified to N-acetylmethionine. Gly-2 carries the N-myristoyl glycine; by host lipid modification. The tract at residues 2 to 119 (GGWSSKPRQG…PPLRDSHPQA (118 aa)) is pre-S1. Residues 2–174 (GGWSSKPRQG…FSRIGDPALN (173 aa)) are pre-S. At 2-181 (GGWSSKPRQG…ALNMENITSG (180 aa)) the chain is on the virion surface; in external conformation side. Residues 2–253 (GGWSSKPRQG…PGYRWMCLRR (252 aa)) lie on the Intravirion; in internal conformation side of the membrane. Trp-4 carries N-linked (GlcNAc...) asparagine glycosylation. Residues 85–118 (LTTVPAAPPPASSNRQSGKQPTPISPPLRDSHPQ) form a disordered region. Over residues 96 to 106 (SSNRQSGKQPT) the composition is skewed to polar residues. Residues 120 to 174 (MQWNSTTFHQTLQDPRVRGLYFPAGGSSSGTVNPVPTTASPISSIFSRIGDPALN) are pre-S2. The chain crosses the membrane as a helical span at residues 182–202 (FLGPLLVLQAGFFLLTRILTI). Residues 203–253 (PQSLDSWWTSLNFLGGTTVCLGQNSQSPISNHSPTSCPPTCPGYRWMCLRR) lie on the Intravirion; in external conformation side of the membrane. A helical membrane pass occupies residues 254-274 (FIIFLFILLLCLIFLLVLLDY). Residues 275–348 (QGMLPVCPLI…WASARFSWLS (74 aa)) are Virion surface-facing. Asn-320 carries an N-linked (GlcNAc...) asparagine; by host glycan. A helical membrane pass occupies residues 349–369 (LLVPFVQWFVGLSPTVWLSVI). At 370 to 375 (WMMWYW) the chain is on the intravirion side. A helical membrane pass occupies residues 376–398 (GPSLYSILSPFLPLLPIFFCLWV). Over 399-400 (YI) the chain is Virion surface.

It belongs to the orthohepadnavirus major surface antigen family. In terms of assembly, in its internal form (Li-HBsAg), interacts with the capsid protein and with the isoform S. Interacts with host chaperone CANX. As to quaternary structure, associates with host chaperone CANX through its pre-S2 N glycan; this association may be essential for isoform M proper secretion. Interacts with isoform L. Interacts with the antigens of satellite virus HDV (HDVAgs); this interaction is required for encapsidation of HDV genomic RNA. Post-translationally, isoform M is N-terminally acetylated by host at a ratio of 90%, and N-glycosylated by host at the pre-S2 region. In terms of processing, myristoylated.

The protein localises to the virion membrane. In terms of biological role, the large envelope protein exists in two topological conformations, one which is termed 'external' or Le-HBsAg and the other 'internal' or Li-HBsAg. In its external conformation the protein attaches the virus to cell receptors and thereby initiating infection. This interaction determines the species specificity and liver tropism. This attachment induces virion internalization predominantly through caveolin-mediated endocytosis. The large envelope protein also assures fusion between virion membrane and endosomal membrane. In its internal conformation the protein plays a role in virion morphogenesis and mediates the contact with the nucleocapsid like a matrix protein. Functionally, the middle envelope protein plays an important role in the budding of the virion. It is involved in the induction of budding in a nucleocapsid independent way. In this process the majority of envelope proteins bud to form subviral lipoprotein particles of 22 nm of diameter that do not contain a nucleocapsid. The chain is Large envelope protein from Homo sapiens (Human).